Here is a 148-residue protein sequence, read N- to C-terminus: U2 snRNP component IST3 (148 aa).

An RRM domain is found at 31 to 109 (AYIYIGNLNR…RALKIDHTFY (79 aa)).

The protein belongs to the IST3 family. Component of the 45S U1.U2.U4/U6.U5 penta-snRNP particle, a subcomplex of the spliceosome. Belongs to the CWC complex (or CEF1-associated complex), a spliceosome sub-complex reminiscent of a late-stage spliceosome composed of the U2, U5 and U6 snRNAs and at least BUD13, BUD31, BRR2, CDC40, CEF1, CLF1, CUS1, CWC2, CWC15, CWC21, CWC22, CWC23, CWC24, CWC25, CWC27, ECM2, HSH155, IST3, ISY1, LEA1, MSL1, NTC20, PRP8, PRP9, PRP11, PRP19, PRP21, PRP22, PRP45, PRP46, SLU7, SMB1, SMD1, SMD2, SMD3, SMX2, SMX3, SNT309, SNU114, SPP2, SYF1, SYF2, RSE1 and YJU2. Belongs to the pre-mRNA retention and splicing (RES) complex composed of at least BUD13, IST3 and PML1. Subunit of the U2 snRNP. Interacts with RDS3.

The protein resides in the cytoplasm. It is found in the nucleus. Required for pre-mRNA splicing and spliceosome assembly. As part of the pre-mRNA retention and splicing (RES) complex, required for nuclear pre-mRNA retention and efficient splicing. Required for MER1-activated splicing. The chain is U2 snRNP component IST3 (IST3) from Saccharomyces cerevisiae (strain ATCC 204508 / S288c) (Baker's yeast).